A 779-amino-acid polypeptide reads, in one-letter code: Anion/proton exchange transporter GEF1 (779 aa).

Over M1–T75 the chain is Cytoplasmic. A helical membrane pass occupies residues F76–F96. Residues T97 to H154 are Lumenal-facing. A helical transmembrane segment spans residues V155–L175. Residues V176–K177 lie on the Cytoplasmic side of the membrane. Residues Y178–F198 form a helical membrane-spanning segment. Residues E199 to E203 lie on the Lumenal side of the membrane. Residues F204 to G224 traverse the membrane as a helical segment. At L225 to A264 the chain is on the cytoplasmic side. A helical membrane pass occupies residues A265–L285. The Lumenal segment spans residues E286 to S296. Residues S297–F319 form a helical membrane-spanning segment. At R320 to K336 the chain is on the cytoplasmic side. A helical transmembrane segment spans residues V337–I357. The Lumenal segment spans residues S358 to K369. A helical membrane pass occupies residues M370 to I390. The Cytoplasmic segment spans residues S391–E436. The chain crosses the membrane as a helical span at residues F437–V457. The Lumenal portion of the chain corresponds to S458–A465. The helical transmembrane segment at G466–V486 threads the bilayer. The Cytoplasmic segment spans residues E487–A500. The helical transmembrane segment at Y501–I523 threads the bilayer. The Lumenal portion of the chain corresponds to M524 to G529. Residues A530–G552 traverse the membrane as a helical segment. The Cytoplasmic segment spans residues I553–I779. CBS domains follow at residues M591–T659 and M688–V744.

Belongs to the chloride channel (TC 2.A.49) family. Homodimer. Interacts with GET3. Proteolytically processed in the secretory pathway by protease KEX2 within the first extracellular loop. However, both the N- and C-terminal products of the cleavage reaction are required for assembly of a functional channel.

It is found in the golgi apparatus membrane. The protein localises to the endosome membrane. The protein resides in the prevacuolar compartment membrane. Its function is as follows. Anion/proton exchange transporter involved in iron and copper cation homeostasis. Involved in intracellular iron metabolism during growth on fermentable and non fermentable carbon sources. Required for proper copper-loading and maturation of multicopper oxidase FET3. Important for adjusting intracellular compartment pH to more alkaline pH under iron limitation. May also transport chloride ions through the plasma membrane. This is Anion/proton exchange transporter GEF1 (GEF1) from Saccharomyces cerevisiae (strain ATCC 204508 / S288c) (Baker's yeast).